Here is a 210-residue protein sequence, read N- to C-terminus: DNA-directed RNA polymerase subunit 5-like protein 1 (210 aa).

This sequence belongs to the archaeal Rpo5/eukaryotic RPB5 RNA polymerase subunit family.

It is found in the nucleus. The polypeptide is DNA-directed RNA polymerase subunit 5-like protein 1 (NRPB5L1) (Arabidopsis thaliana (Mouse-ear cress)).